We begin with the raw amino-acid sequence, 464 residues long: Juvenile hormone epoxide hydrolase 1 (464 aa).

A helical membrane pass occupies residues 7-27 (MLIFAAIAGIAVLYYQITKEL). Residue Asp-224 is the Nucleophile of the active site. The active-site Proton donor is Tyr-370. The active-site Proton acceptor is His-427.

Belongs to the peptidase S33 family. As to expression, developing oocytes, fat body and midgut epithelium of adults.

It localises to the microsome membrane. Its subcellular location is the endoplasmic reticulum membrane. It catalyses the reaction cis-stilbene oxide + H2O = (1R,2R)-hydrobenzoin. It carries out the reaction 1-(4-methoxyphenyl)-N-methyl-N-[(3-methyloxetan-3-yl)methyl]methanamine + H2O = 2-{[(4-methoxybenzyl)(methyl)amino]methyl}-2-methylpropane-1,3-diol. Catalyzes juvenile hormone hydrolysis. This Ctenocephalides felis (Cat flea) protein is Juvenile hormone epoxide hydrolase 1.